An 802-amino-acid polypeptide reads, in one-letter code: DSC E3 ubiquitin ligase complex subunit A (802 aa).

Positions 1-22 (MDNRGSFFFLLIVFYLLLSSQS) are cleaved as a signal peptide. The Lumenal segment spans residues 23 to 381 (RPPLLDQDRE…TGPKIEEYDK (359 aa)). Residues Asn-48, Asn-71, Asn-115, Asn-126, Asn-148, and Asn-166 are each glycosylated (N-linked (GlcNAc...) asparagine). A helical membrane pass occupies residues 382 to 402 (YSARLVFIICGVFAAQITLLL). The Cytoplasmic segment spans residues 403–429 (RQIKEASTPSTRSRISFYTIALMAFGD). A helical transmembrane segment spans residues 430 to 450 (AFVLIFILLELYPAVSFLVMA). Residues 451–453 (TAA) lie on the Lumenal side of the membrane. A helical membrane pass occupies residues 454-474 (FLTFLSVSYIGMKFMMEIWAV). The Cytoplasmic segment spans residues 475–550 (QAPERREQER…QETRNDVGAM (76 aa)). The interval 478 to 541 (ERREQERRSN…TNRGTTSAAQ (64 aa)) is disordered. Over residues 532–541 (TNRGTTSAAQ) the composition is skewed to polar residues. A helical transmembrane segment spans residues 551 to 571 (YARFYFVLFVMLIISIWSFLW). At 572–574 (PNR) the chain is on the lumenal side. The helical transmembrane segment at 575–595 (LGALYARALAFVYLSFWTPQI) threads the bilayer. Residues 596 to 608 (GRNIIRNCRKALR) are Cytoplasmic-facing. A helical transmembrane segment spans residues 609–629 (WDFVIGQSILRLFPFVYFLTV). At 630-642 (RGNVLFIHPDTTT) the chain is on the lumenal side. The helical transmembrane segment at 643–663 (AFALAGWVWIQVWVLASQDIL) threads the bilayer. Residues 664 to 802 (GPRFFVPRGW…PICRESIPPV (139 aa)) lie on the Cytoplasmic side of the membrane. Residues 732 to 796 (CAICMQEIEV…RLRLQCPICR (65 aa)) form an RING-type; atypical zinc finger.

As to quaternary structure, component of the DSC E3 ubiquitin ligase complex composed of dscA, dscB, dscC and dscD.

Its subcellular location is the endoplasmic reticulum membrane. It carries out the reaction S-ubiquitinyl-[E2 ubiquitin-conjugating enzyme]-L-cysteine + [acceptor protein]-L-lysine = [E2 ubiquitin-conjugating enzyme]-L-cysteine + N(6)-ubiquitinyl-[acceptor protein]-L-lysine.. Its pathway is protein modification; protein ubiquitination. Functionally, catalytic component of the DSC E3 ubiquitin ligase complex which is required for the srbA transcriptional activator proteolytic cleavage to release the soluble transcription factor from the membrane in low oxygen or sterol conditions. Required for growth during hypoxia and triazole drug susceptibility, as well as for virulence in a murine model of invasive pulmonary aspergillosis (IPA). This Aspergillus fumigatus (strain CBS 144.89 / FGSC A1163 / CEA10) (Neosartorya fumigata) protein is DSC E3 ubiquitin ligase complex subunit A.